The primary structure comprises 199 residues: Protein GrpE (199 aa).

Residues 1 to 17 (MSDSDNNTKSQQNNPTQ) are compositionally biased toward polar residues. The interval 1–36 (MSDSDNNTKSQQNNPTQTDEKSGEEIQSNQKPQRKF) is disordered.

This sequence belongs to the GrpE family. Homodimer.

The protein localises to the cytoplasm. In terms of biological role, participates actively in the response to hyperosmotic and heat shock by preventing the aggregation of stress-denatured proteins, in association with DnaK and GrpE. It is the nucleotide exchange factor for DnaK and may function as a thermosensor. Unfolded proteins bind initially to DnaJ; upon interaction with the DnaJ-bound protein, DnaK hydrolyzes its bound ATP, resulting in the formation of a stable complex. GrpE releases ADP from DnaK; ATP binding to DnaK triggers the release of the substrate protein, thus completing the reaction cycle. Several rounds of ATP-dependent interactions between DnaJ, DnaK and GrpE are required for fully efficient folding. The chain is Protein GrpE from Ehrlichia canis (strain Jake).